We begin with the raw amino-acid sequence, 598 residues long: Elongation factor 4 (598 aa).

A tr-type G domain is found at 2–184 (KNIRNFSIIA…EIVAKIPAPE (183 aa)). Residues 14–19 (DHGKST) and 131–134 (NKID) each bind GTP.

The protein belongs to the TRAFAC class translation factor GTPase superfamily. Classic translation factor GTPase family. LepA subfamily.

It localises to the cell inner membrane. The enzyme catalyses GTP + H2O = GDP + phosphate + H(+). In terms of biological role, required for accurate and efficient protein synthesis under certain stress conditions. May act as a fidelity factor of the translation reaction, by catalyzing a one-codon backward translocation of tRNAs on improperly translocated ribosomes. Back-translocation proceeds from a post-translocation (POST) complex to a pre-translocation (PRE) complex, thus giving elongation factor G a second chance to translocate the tRNAs correctly. Binds to ribosomes in a GTP-dependent manner. The polypeptide is Elongation factor 4 (Haemophilus influenzae (strain ATCC 51907 / DSM 11121 / KW20 / Rd)).